Here is a 229-residue protein sequence, read N- to C-terminus: MKQLVLIRHGESAWNLENRFTGWADVDLTPKGAEQALAAGEHLRKAGYEFDVAYTSVLRRAIRTLWHVQDAMDLMWLPVVHSWRLNERHYGALTGLNKAETAAQYGDEQVHIWRRSYDIRPPLLEADDERNPKNDSRYAKLNESDIPLGECLKDNVERVLPLWNESIAPALKANKRVLLVAHGNSIRSLIKYLDQMSDEAIMEVNVPNGIPLVYELDDNLKPIQHFYLD.

Residues 8 to 15, 21 to 22, Arg-60, 87 to 90, Lys-98, 114 to 115, and 183 to 184 each bind substrate; these read RHGESAWN, TG, ERHY, RR, and GN. His-9 functions as the Tele-phosphohistidine intermediate in the catalytic mechanism. Glu-87 functions as the Proton donor/acceptor in the catalytic mechanism.

Belongs to the phosphoglycerate mutase family. BPG-dependent PGAM subfamily. Homodimer.

The catalysed reaction is (2R)-2-phosphoglycerate = (2R)-3-phosphoglycerate. It functions in the pathway carbohydrate degradation; glycolysis; pyruvate from D-glyceraldehyde 3-phosphate: step 3/5. Its function is as follows. Catalyzes the interconversion of 2-phosphoglycerate and 3-phosphoglycerate. The chain is 2,3-bisphosphoglycerate-dependent phosphoglycerate mutase from Polynucleobacter asymbioticus (strain DSM 18221 / CIP 109841 / QLW-P1DMWA-1) (Polynucleobacter necessarius subsp. asymbioticus).